A 209-amino-acid chain; its full sequence is dITP/XTP pyrophosphatase (209 aa).

7-12 (SSHGYK) serves as a coordination point for substrate. D70 acts as the Proton acceptor in catalysis. A Mg(2+)-binding site is contributed by D70. Residues S71, 154–157 (FGYD), K177, and 182–183 (HR) contribute to the substrate site.

Belongs to the HAM1 NTPase family. As to quaternary structure, homodimer. Requires Mg(2+) as cofactor.

It carries out the reaction XTP + H2O = XMP + diphosphate + H(+). The enzyme catalyses dITP + H2O = dIMP + diphosphate + H(+). The catalysed reaction is ITP + H2O = IMP + diphosphate + H(+). In terms of biological role, pyrophosphatase that catalyzes the hydrolysis of nucleoside triphosphates to their monophosphate derivatives, with a high preference for the non-canonical purine nucleotides XTP (xanthosine triphosphate), dITP (deoxyinosine triphosphate) and ITP. Seems to function as a house-cleaning enzyme that removes non-canonical purine nucleotides from the nucleotide pool, thus preventing their incorporation into DNA/RNA and avoiding chromosomal lesions. The sequence is that of dITP/XTP pyrophosphatase from Chlamydia trachomatis serovar L2 (strain ATCC VR-902B / DSM 19102 / 434/Bu).